The following is a 200-amino-acid chain: 3-isopropylmalate dehydratase small subunit (200 aa).

Belongs to the LeuD family. LeuD type 1 subfamily. Heterodimer of LeuC and LeuD.

It catalyses the reaction (2R,3S)-3-isopropylmalate = (2S)-2-isopropylmalate. It functions in the pathway amino-acid biosynthesis; L-leucine biosynthesis; L-leucine from 3-methyl-2-oxobutanoate: step 2/4. Catalyzes the isomerization between 2-isopropylmalate and 3-isopropylmalate, via the formation of 2-isopropylmaleate. In Yersinia pseudotuberculosis serotype I (strain IP32953), this protein is 3-isopropylmalate dehydratase small subunit.